The following is a 409-amino-acid chain: Tryptophan synthase beta chain (409 aa).

Lys104 is subject to N6-(pyridoxal phosphate)lysine.

This sequence belongs to the TrpB family. As to quaternary structure, tetramer of two alpha and two beta chains. It depends on pyridoxal 5'-phosphate as a cofactor.

It catalyses the reaction (1S,2R)-1-C-(indol-3-yl)glycerol 3-phosphate + L-serine = D-glyceraldehyde 3-phosphate + L-tryptophan + H2O. Its pathway is amino-acid biosynthesis; L-tryptophan biosynthesis; L-tryptophan from chorismate: step 5/5. Its function is as follows. The beta subunit is responsible for the synthesis of L-tryptophan from indole and L-serine. This is Tryptophan synthase beta chain from Trichodesmium erythraeum (strain IMS101).